Reading from the N-terminus, the 248-residue chain is Ribosomal RNA small subunit methyltransferase J (248 aa).

S-adenosyl-L-methionine contacts are provided by residues 98 to 99, 114 to 115, 150 to 151, and D168; these read RD, ER, and SS.

It belongs to the methyltransferase superfamily. RsmJ family.

It localises to the cytoplasm. It catalyses the reaction guanosine(1516) in 16S rRNA + S-adenosyl-L-methionine = N(2)-methylguanosine(1516) in 16S rRNA + S-adenosyl-L-homocysteine + H(+). In terms of biological role, specifically methylates the guanosine in position 1516 of 16S rRNA. The protein is Ribosomal RNA small subunit methyltransferase J of Shewanella baltica (strain OS195).